Here is an 85-residue protein sequence, read N- to C-terminus: Putative defensin-like protein 142 (85 aa).

The first 24 residues, 1 to 24 (MKKSFLFTFTVLTIFTILVIGVAP), serve as a signal peptide directing secretion. Intrachain disulfides connect cysteine 30-cysteine 78, cysteine 41-cysteine 63, cysteine 46-cysteine 73, and cysteine 50-cysteine 75.

Belongs to the DEFL family.

It is found in the secreted. The sequence is that of Putative defensin-like protein 142 (LCR34) from Arabidopsis thaliana (Mouse-ear cress).